Reading from the N-terminus, the 373-residue chain is Dual-specificity RNA methyltransferase RlmN (373 aa).

E104 serves as the catalytic Proton acceptor. Residues 110–349 (KNQRTTLCIS…VTIRKIRGYD (240 aa)) form the Radical SAM core domain. C117 and C354 are disulfide-bonded. Positions 124, 128, and 131 each coordinate [4Fe-4S] cluster. S-adenosyl-L-methionine-binding positions include 178–179 (GE), S210, 232–234 (SLH), and N311. The active-site S-methylcysteine intermediate is the C354.

The protein belongs to the radical SAM superfamily. RlmN family. [4Fe-4S] cluster is required as a cofactor.

The protein localises to the cytoplasm. The enzyme catalyses adenosine(2503) in 23S rRNA + 2 reduced [2Fe-2S]-[ferredoxin] + 2 S-adenosyl-L-methionine = 2-methyladenosine(2503) in 23S rRNA + 5'-deoxyadenosine + L-methionine + 2 oxidized [2Fe-2S]-[ferredoxin] + S-adenosyl-L-homocysteine. It catalyses the reaction adenosine(37) in tRNA + 2 reduced [2Fe-2S]-[ferredoxin] + 2 S-adenosyl-L-methionine = 2-methyladenosine(37) in tRNA + 5'-deoxyadenosine + L-methionine + 2 oxidized [2Fe-2S]-[ferredoxin] + S-adenosyl-L-homocysteine. In terms of biological role, specifically methylates position 2 of adenine 2503 in 23S rRNA and position 2 of adenine 37 in tRNAs. m2A2503 modification seems to play a crucial role in the proofreading step occurring at the peptidyl transferase center and thus would serve to optimize ribosomal fidelity. The protein is Dual-specificity RNA methyltransferase RlmN of Buchnera aphidicola subsp. Baizongia pistaciae (strain Bp).